A 92-amino-acid chain; its full sequence is Large ribosomal subunit protein bL34m (92 aa).

The transit peptide at 1–46 (MALLAGSLLGPTSRSAALLGGRWLQPRAWLGFPDAWGLPTPQQARG) directs the protein to the mitochondrion. A compositionally biased stretch (polar residues) spans 40–57 (TPQQARGKSRGNEYQPSN). The segment at 40-63 (TPQQARGKSRGNEYQPSNIKRKNK) is disordered. Residue serine 71 is modified to Phosphoserine.

It belongs to the bacterial ribosomal protein bL34 family. As to quaternary structure, component of the mitochondrial ribosome large subunit (39S) which comprises a 16S rRNA and about 50 distinct proteins.

It localises to the mitochondrion. This chain is Large ribosomal subunit protein bL34m (MRPL34), found in Macaca fascicularis (Crab-eating macaque).